A 388-amino-acid polypeptide reads, in one-letter code: MRYLTAGESHGPSLTAIIEGIPAGLKLSAKDINEDLKRRQGGYGRGNRMKIETDQVIISSGVRHGKTLGSPITLTVTNKDHSKWLDIMSVEDIEERLKQKRRIKHPRPGHADLVGGIKYRFDDLRNALERSSARETTMRVAIGAIAKRILKEIGIEIANHIVVFGGKEITVPDKLTVQQIKVLSSQSQVAIVNPSFEQEIKDYIDSVKKAGDTIGGVVETIVGGVPVGLGSYVHWDRKLDAKIAQAVVSINAFKGVEFGLGFKSGFLKGSQVMDSISWTKDQGYIRQSNNLGGFEGGMTNGEPIIVRGVMKPIPTLYKPLMSVDIDTHEPYRATVERSDPTALPAAGVVMEAVVATVLVTEVLEKFSSDNMYELKEAVKLYRNYVDHF.

Residues Arg-39 and Arg-45 each contribute to the NADP(+) site. Residues 130-132 (RSS), 251-252 (NA), Gly-296, 311-315 (KPIPT), and Arg-337 contribute to the FMN site.

This sequence belongs to the chorismate synthase family. Homotetramer. FMNH2 is required as a cofactor.

The catalysed reaction is 5-O-(1-carboxyvinyl)-3-phosphoshikimate = chorismate + phosphate. The protein operates within metabolic intermediate biosynthesis; chorismate biosynthesis; chorismate from D-erythrose 4-phosphate and phosphoenolpyruvate: step 7/7. Catalyzes the anti-1,4-elimination of the C-3 phosphate and the C-6 proR hydrogen from 5-enolpyruvylshikimate-3-phosphate (EPSP) to yield chorismate, which is the branch point compound that serves as the starting substrate for the three terminal pathways of aromatic amino acid biosynthesis. This reaction introduces a second double bond into the aromatic ring system. The polypeptide is Chorismate synthase (Streptococcus agalactiae serotype V (strain ATCC BAA-611 / 2603 V/R)).